A 149-amino-acid polypeptide reads, in one-letter code: Large ribosomal subunit protein uL13 (149 aa).

This sequence belongs to the universal ribosomal protein uL13 family. As to quaternary structure, part of the 50S ribosomal subunit.

Its function is as follows. This protein is one of the early assembly proteins of the 50S ribosomal subunit, although it is not seen to bind rRNA by itself. It is important during the early stages of 50S assembly. This chain is Large ribosomal subunit protein uL13, found in Thermosipho africanus (strain TCF52B).